Consider the following 92-residue polypeptide: Probable Fe(2+)-trafficking protein (92 aa).

The protein belongs to the Fe(2+)-trafficking protein family.

Its function is as follows. Could be a mediator in iron transactions between iron acquisition and iron-requiring processes, such as synthesis and/or repair of Fe-S clusters in biosynthetic enzymes. The chain is Probable Fe(2+)-trafficking protein from Xanthomonas oryzae pv. oryzae (strain MAFF 311018).